Here is a 171-residue protein sequence, read N- to C-terminus: Vimentin-type intermediate filament-associated coiled-coil protein (171 aa).

Residues 7 to 98 (LQIREANAHL…QRDQMIQELQ (92 aa)) are a coiled coil. A disordered region spans residues 126–171 (ELGPLPSSHSHGAQLLPDGPGPPLGNSMREEEGQDDQQPAVFGTTV).

Expressed in brain, heart, kidney, liver, lung, skeletal muscle, spleen and testis. Within the kidney expression is pronounced within glomeruli.

The protein resides in the cytoplasm. The chain is Vimentin-type intermediate filament-associated coiled-coil protein (Vmac) from Rattus norvegicus (Rat).